Reading from the N-terminus, the 317-residue chain is Large ribosomal subunit protein uL10 (317 aa).

Belongs to the universal ribosomal protein uL10 family. In terms of assembly, P0 forms a pentameric complex by interaction with dimers of P1 and P2. Post-translationally, phosphorylated.

Its function is as follows. Ribosomal protein P0 is the functional equivalent of E.coli protein L10. In Ictalurus punctatus (Channel catfish), this protein is Large ribosomal subunit protein uL10 (rplp0).